The chain runs to 121 residues: Alpha-endosulfine (121 aa).

The interval 1–53 is disordered; it reads MSQKQEEENPAEETGEEKQDTQEKEGILPERAEEAKLKAKYPSLGQKPGGSDF. Ser-2 carries the N-acetylserine modification. Phosphoserine is present on Ser-2. Residues 16 to 37 are compositionally biased toward basic and acidic residues; it reads EEKQDTQEKEGILPERAEEAKL. A Phosphothreonine modification is found at Thr-21. Residue Ser-43 is modified to Phosphoserine. Residue Ser-67 is modified to Phosphoserine; by GWL. Residues 79 to 121 are disordered; that stretch reads NKQLPSAGPDKNLVTGDHIPTPQDLPQRKSSLVTSKLAGGQVE. A Phosphoserine; by PKA modification is found at Ser-109.

The protein belongs to the endosulfine family. As to quaternary structure, interacts (when phosphorylated at Ser-67) with PPP2R2D. Interacts with ABCC8. Interacts with SNCA; interaction is disrupted when phosphorylated at Ser-109. In terms of processing, phosphorylation at Ser-67 by GWL during mitosis is essential for interaction with PPP2R2D (PR55-delta) and subsequent inactivation of PP2A. Phosphorylated by PKA. In terms of tissue distribution, widely expressed with high levels in skeletal muscle and brain and lower levels in the pancreas.

The protein resides in the cytoplasm. Functionally, protein phosphatase inhibitor that specifically inhibits protein phosphatase 2A (PP2A) during mitosis. When phosphorylated at Ser-67 during mitosis, specifically interacts with PPP2R2D (PR55-delta) and inhibits its activity, leading to inactivation of PP2A, an essential condition to keep cyclin-B1-CDK1 activity high during M phase. Also acts as a stimulator of insulin secretion by interacting with sulfonylurea receptor (ABCC8), thereby preventing sulfonylurea from binding to its receptor and reducing K(ATP) channel currents. In Homo sapiens (Human), this protein is Alpha-endosulfine (ENSA).